We begin with the raw amino-acid sequence, 396 residues long: Elongation factor Tu (396 aa).

One can recognise a tr-type G domain in the interval 10-206 (KPHCNIGTIG…QVDAYIPQPE (197 aa)). The G1 stretch occupies residues 19 to 26 (GHVDHGKT). GTP is bound at residue 19–26 (GHVDHGKT). Residue Thr-26 coordinates Mg(2+). The tract at residues 60–64 (GITIS) is G2. Residues 81–84 (DCPG) are G3. GTP-binding positions include 81–85 (DCPGH) and 136–139 (NKCD). A G4 region spans residues 136 to 139 (NKCD). The G5 stretch occupies residues 174-176 (SAL).

The protein belongs to the TRAFAC class translation factor GTPase superfamily. Classic translation factor GTPase family. EF-Tu/EF-1A subfamily. In terms of assembly, monomer.

It is found in the cytoplasm. The catalysed reaction is GTP + H2O = GDP + phosphate + H(+). Functionally, GTP hydrolase that promotes the GTP-dependent binding of aminoacyl-tRNA to the A-site of ribosomes during protein biosynthesis. This Rhodopseudomonas palustris (strain ATCC BAA-98 / CGA009) protein is Elongation factor Tu.